We begin with the raw amino-acid sequence, 149 residues long: Transcriptional repressor NrdR (149 aa).

Residues 3–34 fold into a zinc finger; the sequence is CPFCSAVDTKVIDSRLVGDGSQVRRRRQCLVC. The region spanning 49–139 is the ATP-cone domain; it reads PRVVKSNGVR…VYRSFEDVRE (91 aa).

It belongs to the NrdR family. Zn(2+) serves as cofactor.

Negatively regulates transcription of bacterial ribonucleotide reductase nrd genes and operons by binding to NrdR-boxes. The protein is Transcriptional repressor NrdR of Edwardsiella ictaluri (strain 93-146).